We begin with the raw amino-acid sequence, 621 residues long: MAALKEDRSYGLSCGRVSDGSKVSVFHVKLTDSALRAFESYRARQDSVSLRPSIRFQGSQGHISIPQPDCPAEARTFSFYLSNIGRDNPQGSFDCIQQYVSSHGEVHLDCLGSIQDKITVCATDDSYQKARQSMAQAEEETRSRSAIVIKAGGRYLGKKVQFRKPAPGATDAVPSRKRATPINLASAIRKSGASAVSGGSGVSQRPFRDRVLHLLALRPYRKAELLLRLQKDGLTQADKDALDGLLQQVANMSAKDGTCTLQDCMYKDVQKDWPGYSEGDQQLLKRVLVRKLCQPQSTGSLLGDPAASSPPGERGRSASPPQKRLQPPDFIDPLANKKPRISHFTQRAQPAVNGKLGVPNGREALLPTPGPPASTDTLSSSTHLPPRLEPPRAHDPLADVSNDLGHSGRDCEHGEAAAPAPTVRLGLPLLTDCAQPSRPHGSPSRSKPKKKSKKHKDKERAAEDKPRAQLPDCAPATHATPGAPADTPGLNGTCSVSSVPTSTSETPDYLLKYAAISSSEQRQSYKNDFNAEYSEYRDLHARIERITRRFTQLDAQLRQLSQGSEEYETTRGQILQEYRKIKKTNTNYSQEKHRCEYLHSKLAHIKRLIAEYDQRQLQAWP.

N-acetylalanine is present on Ala2. Thr180 carries the post-translational modification Phosphothreonine. Disordered regions lie at residues 296-417 (QSTG…GEAA) and 431-504 (TDCA…TSTS). Phosphoserine is present on Ser309. Residues 374 to 383 (STDTLSSSTH) show a composition bias toward polar residues. Residues 406 to 415 (HSGRDCEHGE) show a composition bias toward basic and acidic residues. Over residues 436 to 445 (PSRPHGSPSR) the composition is skewed to low complexity. Residues 445–459 (RSKPKKKSKKHKDKE) carry the Nuclear localization signal motif. Residues 446-457 (SKPKKKSKKHKD) show a composition bias toward basic residues. Residues 458–467 (KERAAEDKPR) show a composition bias toward basic and acidic residues. The segment covering 474–504 (APATHATPGAPADTPGLNGTCSVSSVPTSTS) has biased composition (low complexity). The OCEL domain maps to 507–617 (PDYLLKYAAI…LIAEYDQRQL (111 aa)). Ser561 is subject to Phosphoserine.

This sequence belongs to the ELL/occludin family. As to quaternary structure, component of the super elongation complex (SEC), at least composed of EAF1, EAF2, CDK9, MLLT3/AF9, AFF (AFF1 or AFF4), the P-TEFb complex and ELL (ELL, ELL2 or ELL3). Component of the little elongation complex (LEC), at least composed of ELL (ELL, ELL2 or ELL3), ZC3H8, ICE1 and ICE2. Interacts with AFF4; the interaction is direct. Interacts with EAF1 and EAF2. Interacts with ICE1 (via N-terminus domain). Interacts with ICE2. Interacts with USPL1. As to expression, expressed in all tissues tested. Highest levels found in placenta, skeletal muscle, testis and peripheral blood leukocytes.

The protein resides in the nucleus. Its subcellular location is the nucleus speckle. The protein localises to the cajal body. Functionally, elongation factor component of the super elongation complex (SEC), a complex required to increase the catalytic rate of RNA polymerase II transcription by suppressing transient pausing by the polymerase at multiple sites along the DNA. Elongation factor component of the little elongation complex (LEC), a complex required to regulate small nuclear RNA (snRNA) gene transcription by RNA polymerase II and III. Specifically required for stimulating the elongation step of RNA polymerase II- and III-dependent snRNA gene transcription. ELL also plays an early role before its assembly into in the SEC complex by stabilizing RNA polymerase II recruitment/initiation and entry into the pause site. Required to stabilize the pre-initiation complex and early elongation. The chain is RNA polymerase II elongation factor ELL (ELL) from Homo sapiens (Human).